Consider the following 214-residue polypeptide: GTP-binding protein ypt3 (214 aa).

17-24 serves as a coordination point for GTP; sequence GDSGVGKS. The Effector region motif lies at 39–47; the sequence is SKSTIGVEF. T42 is subject to Phosphothreonine. GTP is bound by residues 65-69 and 123-126; these read DTAGQ and NKTD. S-geranylgeranyl cysteine attachment occurs at residues C213 and C214.

This sequence belongs to the small GTPase superfamily. Rab family.

It localises to the cell membrane. Its subcellular location is the endosome membrane. It is found in the golgi apparatus membrane. The protein localises to the cytoplasm. The protein resides in the nucleus. In terms of biological role, has a role in retrograde traffricking of proteins from the endosome to the Golgi. Involved in the secretory pathway where it has a role in acid phosphatase secretion. This chain is GTP-binding protein ypt3 (ypt3), found in Schizosaccharomyces pombe (strain 972 / ATCC 24843) (Fission yeast).